We begin with the raw amino-acid sequence, 646 residues long: Amyloid beta A4 precursor protein-binding family B member 1-interacting protein (646 aa).

Positions 82 to 141 are disordered; sequence FATERDTSKGSVPVAPAPSKPQSNFSLPASFDSSKPATSSNSIAAPPPPPAFKPSKEEEE. A compositionally biased stretch (polar residues) spans 101 to 116; the sequence is KPQSNFSLPASFDSSK. The 87-residue stretch at 162–248 folds into the Ras-associating domain; that stretch reads KKLVVKVEIT…NKVLFQEKKH (87 aa). Positions 292 to 401 constitute a PH domain; that stretch reads VPDLEGVLYL…WVTGIRVAKY (110 aa). Residues 420–646 are disordered; the sequence is ASWANRTIQA…NAMQKKRTQP (227 aa). The segment covering 429–445 has biased composition (low complexity); that stretch reads ASSTASTPSPTPKAKAA. Pro residues-rich tracts occupy residues 465-500, 509-536, 560-577, and 584-598; these read LPPP…PPVP, FPPP…PPPE, LPPP…PPPA, and APPP…PAPA.

It belongs to the MRL family.

It localises to the cell membrane. The protein resides in the cytoplasm. Its subcellular location is the cytoskeleton. Its function is as follows. Appears to function in the signal transduction from Ras activation to actin cytoskeletal remodeling. The protein is Amyloid beta A4 precursor protein-binding family B member 1-interacting protein (apbb1ip) of Danio rerio (Zebrafish).